Here is a 974-residue protein sequence, read N- to C-terminus: GATOR2 complex protein WDR59 (974 aa).

7 WD repeats span residues 57 to 98, 103 to 143, 146 to 185, 189 to 229, 232 to 276, 278 to 318, and 319 to 362; these read QSKW…GEVG, GHTR…KPTV, SAVA…TAVE, AHLS…KYLN, PCQV…TPVH, FVGH…RVDS, and QMQR…TASH. Residues 350–374 are disordered; it reads HTEDTDHQHTASHGEEEALKEDPPR. The RWD domain occupies 393–494; the sequence is QEFSLINVQI…RQLVSCLESF (102 aa). S564 carries the phosphoserine modification. The stretch at 668–706 is one WD 8 repeat; the sequence is LNVNDIQETCQKNAASALLVGRKDLVQVWSLATVATDLC. S821, S822, and S830 each carry phosphoserine. The segment at 831–852 is disordered; it reads LTYSDPRERERDQHDKNKRLLD. Residues 835 to 851 show a composition bias toward basic and acidic residues; it reads DPRERERDQHDKNKRLL. A C4-type zinc finger spans residues 901-920; it reads YCSHCRSEVRGTQCAICKGF. Zn(2+)-binding residues include C902, C905, C914, C917, C927, C938, H943, H946, H949, C960, C964, C966, and C968. The segment at 921 to 973 adopts an RING-type; atypical zinc-finger fold; the sequence is TFQCAICHVAVRGSSNFCLTCGHGGHTSHMMEWFRTQEVCPTGCGCHCLLEST.

It belongs to the WD repeat WDR59 family. In terms of assembly, component of the GATOR2 subcomplex, composed of MIOS, SEC13, SEH1L, WDR24 and WDR59. The GATOR2 complex interacts with CASTOR1 and CASTOR2; the interaction is negatively regulated by arginine. The GATOR2 complex interacts with SESN1, SESN2 and SESN3; the interaction is negatively regulated by amino acids. Interacts with DDB1-CUL4A/B E3 ligase complexes.

The protein resides in the lysosome membrane. With respect to regulation, the GATOR2 complex is negatively regulated by the upstream amino acid sensors CASTOR1 and SESN2, which sequester the GATOR2 complex in absence of amino acids. In the presence of abundant amino acids, GATOR2 is released from CASTOR1 and SESN2 and activated. In terms of biological role, as a component of the GATOR2 complex, functions as an activator of the amino acid-sensing branch of the mTORC1 signaling pathway. The GATOR2 complex indirectly activates mTORC1 through the inhibition of the GATOR1 subcomplex. GATOR2 probably acts as an E3 ubiquitin-protein ligase toward GATOR1. In the presence of abundant amino acids, the GATOR2 complex mediates ubiquitination of the NPRL2 core component of the GATOR1 complex, leading to GATOR1 inactivation. In the absence of amino acids, GATOR2 is inhibited, activating the GATOR1 complex. This is GATOR2 complex protein WDR59 from Homo sapiens (Human).